The primary structure comprises 339 residues: Ketol-acid reductoisomerase (NADP(+)) (339 aa).

In terms of domain architecture, KARI N-terminal Rossmann spans 1–182; sequence MRVYYDRDAD…GGGRAGIIET (182 aa). Residues 24 to 27, Arg48, Ser51, Ser53, and 83 to 86 contribute to the NADP(+) site; these read YGSQ and DELQ. His108 is a catalytic residue. NADP(+) is bound at residue Gly134. Positions 183–328 constitute a KARI C-terminal knotted domain; the sequence is TFREECETDL…AKLRDMMPWI (146 aa). The Mg(2+) site is built by Asp191, Glu195, Glu227, and Glu231. Ser252 is a binding site for substrate.

It belongs to the ketol-acid reductoisomerase family. The cofactor is Mg(2+).

The catalysed reaction is (2R)-2,3-dihydroxy-3-methylbutanoate + NADP(+) = (2S)-2-acetolactate + NADPH + H(+). It catalyses the reaction (2R,3R)-2,3-dihydroxy-3-methylpentanoate + NADP(+) = (S)-2-ethyl-2-hydroxy-3-oxobutanoate + NADPH + H(+). The protein operates within amino-acid biosynthesis; L-isoleucine biosynthesis; L-isoleucine from 2-oxobutanoate: step 2/4. Its pathway is amino-acid biosynthesis; L-valine biosynthesis; L-valine from pyruvate: step 2/4. Involved in the biosynthesis of branched-chain amino acids (BCAA). Catalyzes an alkyl-migration followed by a ketol-acid reduction of (S)-2-acetolactate (S2AL) to yield (R)-2,3-dihydroxy-isovalerate. In the isomerase reaction, S2AL is rearranged via a Mg-dependent methyl migration to produce 3-hydroxy-3-methyl-2-ketobutyrate (HMKB). In the reductase reaction, this 2-ketoacid undergoes a metal-dependent reduction by NADPH to yield (R)-2,3-dihydroxy-isovalerate. This chain is Ketol-acid reductoisomerase (NADP(+)), found in Rhodopseudomonas palustris (strain BisB18).